The sequence spans 400 residues: Ornithine aminotransferase (400 aa).

The residue at position 254 (Lys254) is an N6-(pyridoxal phosphate)lysine.

It belongs to the class-III pyridoxal-phosphate-dependent aminotransferase family. OAT subfamily. The cofactor is pyridoxal 5'-phosphate.

It is found in the cytoplasm. It carries out the reaction a 2-oxocarboxylate + L-ornithine = L-glutamate 5-semialdehyde + an L-alpha-amino acid. Its pathway is amino-acid biosynthesis; L-proline biosynthesis; L-glutamate 5-semialdehyde from L-ornithine: step 1/1. Its function is as follows. Catalyzes the interconversion of ornithine to glutamate semialdehyde. The polypeptide is Ornithine aminotransferase (Exiguobacterium sp. (strain ATCC BAA-1283 / AT1b)).